A 420-amino-acid chain; its full sequence is Enolase (420 aa).

Gln-162 lines the (2R)-2-phosphoglycerate pocket. Glu-206 (proton donor) is an active-site residue. Mg(2+) is bound by residues Asp-241, Glu-282, and Asp-308. (2R)-2-phosphoglycerate contacts are provided by Lys-333, Arg-362, Ser-363, and Lys-384. Lys-333 functions as the Proton acceptor in the catalytic mechanism.

The protein belongs to the enolase family. The cofactor is Mg(2+).

It localises to the cytoplasm. The protein localises to the secreted. Its subcellular location is the cell surface. The enzyme catalyses (2R)-2-phosphoglycerate = phosphoenolpyruvate + H2O. It functions in the pathway carbohydrate degradation; glycolysis; pyruvate from D-glyceraldehyde 3-phosphate: step 4/5. In terms of biological role, catalyzes the reversible conversion of 2-phosphoglycerate (2-PG) into phosphoenolpyruvate (PEP). It is essential for the degradation of carbohydrates via glycolysis. This chain is Enolase, found in Methanothrix thermoacetophila (strain DSM 6194 / JCM 14653 / NBRC 101360 / PT) (Methanosaeta thermophila).